The sequence spans 143 residues: Ribosome maturation factor RimP (143 aa).

This sequence belongs to the RimP family.

It localises to the cytoplasm. Its function is as follows. Required for maturation of 30S ribosomal subunits. The protein is Ribosome maturation factor RimP of Neisseria meningitidis serogroup C / serotype 2a (strain ATCC 700532 / DSM 15464 / FAM18).